The chain runs to 32 residues: MSDINATRLPIWGIGCDPCIGDDVTILLTRGE.

A propeptide spanning residues 1 to 10 (MSDINATRLP) is cleaved from the precursor. A cross-link (cyclopeptide (Ile-Pro)) is located at residues 11 to 18 (IWGIGCDP). The 2'-cysteinyl-6'-hydroxytryptophan sulfoxide (Trp-Cys) cross-link spans 12–16 (WGIGC). Residues 19–32 (CIGDDVTILLTRGE) constitute a propeptide that is removed on maturation.

Belongs to the MSDIN fungal toxin family. Post-translationally, processed by the macrocyclase-peptidase enzyme POPB to yield a toxic cyclic decapeptide. POPB first removes 10 residues from the N-terminus. Conformational trapping of the remaining peptide forces the enzyme to release this intermediate rather than proceed to macrocyclization. The enzyme rebinds the remaining peptide in a different conformation and catalyzes macrocyclization of the N-terminal 8 residues.

Toxin belonging to the bicyclic octapeptides amatoxins that acts by binding non-competitively to RNA polymerase II and greatly slowing the elongation of transcripts from target promoters. This chain is Beta-amanitin proprotein, found in Amanita phalloides (Death cap).